Reading from the N-terminus, the 304-residue chain is Ribonuclease Z (304 aa).

Zn(2+) is bound by residues H63, H65, D67, H68, H143, D213, and H271. D67 functions as the Proton acceptor in the catalytic mechanism.

It belongs to the RNase Z family. As to quaternary structure, homodimer. The cofactor is Zn(2+).

It carries out the reaction Endonucleolytic cleavage of RNA, removing extra 3' nucleotides from tRNA precursor, generating 3' termini of tRNAs. A 3'-hydroxy group is left at the tRNA terminus and a 5'-phosphoryl group is left at the trailer molecule.. Zinc phosphodiesterase, which displays some tRNA 3'-processing endonuclease activity. Probably involved in tRNA maturation, by removing a 3'-trailer from precursor tRNA. This Bacteroides fragilis (strain YCH46) protein is Ribonuclease Z.